We begin with the raw amino-acid sequence, 374 residues long: Ribosomal RNA large subunit methyltransferase G (374 aa).

The protein belongs to the methyltransferase superfamily. RlmG family.

Its subcellular location is the cytoplasm. The catalysed reaction is guanosine(1835) in 23S rRNA + S-adenosyl-L-methionine = N(2)-methylguanosine(1835) in 23S rRNA + S-adenosyl-L-homocysteine + H(+). Its function is as follows. Specifically methylates the guanine in position 1835 (m2G1835) of 23S rRNA. The chain is Ribosomal RNA large subunit methyltransferase G from Pseudomonas savastanoi pv. phaseolicola (strain 1448A / Race 6) (Pseudomonas syringae pv. phaseolicola (strain 1448A / Race 6)).